We begin with the raw amino-acid sequence, 427 residues long: Serine--tRNA ligase (427 aa).

232-234 contributes to the L-serine binding site; the sequence is TAE. 263–265 contacts ATP; the sequence is RSE. Glu286 serves as a coordination point for L-serine. Residue 350–353 participates in ATP binding; sequence EISS. Ser385 contacts L-serine.

It belongs to the class-II aminoacyl-tRNA synthetase family. Type-1 seryl-tRNA synthetase subfamily. Homodimer. The tRNA molecule binds across the dimer.

The protein localises to the cytoplasm. The catalysed reaction is tRNA(Ser) + L-serine + ATP = L-seryl-tRNA(Ser) + AMP + diphosphate + H(+). It carries out the reaction tRNA(Sec) + L-serine + ATP = L-seryl-tRNA(Sec) + AMP + diphosphate + H(+). It functions in the pathway aminoacyl-tRNA biosynthesis; selenocysteinyl-tRNA(Sec) biosynthesis; L-seryl-tRNA(Sec) from L-serine and tRNA(Sec): step 1/1. In terms of biological role, catalyzes the attachment of serine to tRNA(Ser). Is also able to aminoacylate tRNA(Sec) with serine, to form the misacylated tRNA L-seryl-tRNA(Sec), which will be further converted into selenocysteinyl-tRNA(Sec). This Aromatoleum aromaticum (strain DSM 19018 / LMG 30748 / EbN1) (Azoarcus sp. (strain EbN1)) protein is Serine--tRNA ligase.